A 317-amino-acid chain; its full sequence is Melanocyte-stimulating hormone receptor (317 aa).

Polar residues predominate over residues 1–20 (MPVQGSQRSLLGAVNSTPTA). The disordered stretch occupies residues 1–23 (MPVQGSQRSLLGAVNSTPTATPH). Over 1-37 (MPVQGSQRSLLGAVNSTPTATPHLRPAANQTGPQCLE) the chain is Extracellular. A glycan (N-linked (GlcNAc...) asparagine) is linked at N29. Residues 38–63 (VSIPDGLFLCLGLVSLVENTLVVAAI) traverse the membrane as a helical segment. Residues 64-72 (AKNRNLHSP) are Cytoplasmic-facing. The chain crosses the membrane as a helical span at residues 73–93 (MYCFICCLALSDLLVSVSSVL). Topologically, residues 94 to 118 (ETAVLLLLGAGALAAQATVVQQLGN) are extracellular. The helical transmembrane segment at 119–140 (VIDVLLCSSMVSSLFFLGAIAM) threads the bilayer. At 141 to 163 (DRYISIFYALRYHSIVTLARARR) the chain is on the cytoplasmic side. The chain crosses the membrane as a helical span at residues 164 to 183 (AIAAIWAASILSSTLFIAYC). The Extracellular segment spans residues 184–191 (DRTAALLC). A helical transmembrane segment spans residues 192–211 (LVVFFLAMLVLMAVLYVHML). At 212-240 (TQARQHAQGIARLHKRQRPVQQGWGLKGA) the chain is on the cytoplasmic side. The helical transmembrane segment at 241–266 (ATLTILLGVFFLCWGPFFLHLTLIAV) threads the bilayer. Over 267–279 (CPQHPTCSCIFKN) the chain is Extracellular. A helical transmembrane segment spans residues 280-300 (FRLFLALIVCNAIVDPLIYAF). Topologically, residues 301–317 (RSQELRKTLKEVLLFFW) are cytoplasmic.

It belongs to the G-protein coupled receptor 1 family. Interacts with MGRN1, but does not undergo MGRN1-mediated ubiquitination; this interaction competes with GNAS-binding and thus inhibits agonist-induced cAMP production. Interacts with OPN3; the interaction results in a decrease in MC1R-mediated cAMP signaling and ultimately a decrease in melanin production in melanocytes.

It is found in the cell membrane. Receptor for MSH (alpha, beta and gamma) and ACTH. The activity of this receptor is mediated by G proteins which activate adenylate cyclase. Mediates melanogenesis, the production of eumelanin (black/brown) and phaeomelanin (red/yellow), via regulation of cAMP signaling in melanocytes. The sequence is that of Melanocyte-stimulating hormone receptor (MC1R) from Lemur catta (Ring-tailed lemur).